Here is a 983-residue protein sequence, read N- to C-terminus: Probable beta-galactosidase C (983 aa).

A signal peptide spans 1-23 (MRIFSFLFLLLLGILTGQGLVSG). Tyrosine 82, asparagine 127, alanine 128, glutamate 129, and asparagine 187 together coordinate substrate. The active-site Proton donor is glutamate 188. N-linked (GlcNAc...) asparagine glycosylation is present at asparagine 197. Tyrosine 251 contributes to the substrate binding site. A disulfide bond links cysteine 257 and cysteine 304. Asparagine 276 carries N-linked (GlcNAc...) asparagine glycosylation. Glutamate 287 acts as the Nucleophile in catalysis. Tyrosine 353 is a substrate binding site. N-linked (GlcNAc...) asparagine glycans are attached at residues asparagine 391, asparagine 434, asparagine 466, asparagine 516, asparagine 601, asparagine 676, asparagine 714, asparagine 719, and asparagine 804.

It belongs to the glycosyl hydrolase 35 family.

The protein resides in the secreted. It catalyses the reaction Hydrolysis of terminal non-reducing beta-D-galactose residues in beta-D-galactosides.. Cleaves beta-linked terminal galactosyl residues from gangliosides, glycoproteins, and glycosaminoglycans. In Neosartorya fischeri (strain ATCC 1020 / DSM 3700 / CBS 544.65 / FGSC A1164 / JCM 1740 / NRRL 181 / WB 181) (Aspergillus fischerianus), this protein is Probable beta-galactosidase C (lacC).